Consider the following 209-residue polypeptide: Redox-sensing transcriptional repressor Rex (209 aa).

A DNA-binding region (H-T-H motif) is located at residues 16–55; the sequence is LYYRFIQNLSLSGKQRVSSAELSEAVKVDSATIRRDFSYF. Residue 90–95 coordinates NAD(+); it reads GVGNLG.

The protein belongs to the transcriptional regulatory Rex family. Homodimer.

Its subcellular location is the cytoplasm. Its function is as follows. Modulates transcription in response to changes in cellular NADH/NAD(+) redox state. This chain is Redox-sensing transcriptional repressor Rex, found in Bacillus thuringiensis (strain Al Hakam).